The following is a 126-amino-acid chain: Nascent polypeptide-associated complex protein (126 aa).

The NAC-A/B domain maps to 10–77 (PRMMKQMQKM…AKKVAKAEEK (68 aa)).

Belongs to the NAC-alpha family. Homodimer. Interacts with the ribosome. Binds ribosomal RNA.

In terms of biological role, contacts the emerging nascent chain on the ribosome. The protein is Nascent polypeptide-associated complex protein of Methanococcus maripaludis (strain C6 / ATCC BAA-1332).